The primary structure comprises 382 residues: Leucine carboxyl methyltransferase 1 (382 aa).

Positions 1-11 (MSAPQIPNLNT) are enriched in polar residues. The tract at residues 1–45 (MSAPQIPNLNTLRRGGGRGRFRARGGPDSSSSSGNKDRVVQGTDN) is disordered. S-adenosyl-L-methionine-binding positions include Arg88, Gly121, Asp146, 193-194 (DL), and Glu230.

Belongs to the methyltransferase superfamily. LCMT family.

The catalysed reaction is [phosphatase 2A protein]-C-terminal L-leucine + S-adenosyl-L-methionine = [phosphatase 2A protein]-C-terminal L-leucine methyl ester + S-adenosyl-L-homocysteine. Functionally, methylates the carboxyl group of the C-terminal leucine residue of protein phosphatase 2A catalytic subunits to form alpha-leucine ester residues. This Emericella nidulans (strain FGSC A4 / ATCC 38163 / CBS 112.46 / NRRL 194 / M139) (Aspergillus nidulans) protein is Leucine carboxyl methyltransferase 1 (ppm1).